Reading from the N-terminus, the 562-residue chain is 3-(3-hydroxy-phenyl)propionate/3-hydroxycinnamic acid hydroxylase (562 aa).

FAD contacts are provided by residues 8–37 and 275–285; these read DVVIVGAGPVGLTLANILGGQGVRTLIIEE and FRKGRMLLAGD.

It belongs to the PheA/TfdB FAD monooxygenase family. Requires FAD as cofactor.

It catalyses the reaction 3-(3-hydroxyphenyl)propanoate + NADH + O2 + H(+) = 3-(2,3-dihydroxyphenyl)propanoate + NAD(+) + H2O. It carries out the reaction (2E)-3-(3-hydroxyphenyl)prop-2-enoate + NADH + O2 + H(+) = (2E)-3-(2,3-dihydroxyphenyl)prop-2-enoate + NAD(+) + H2O. The protein operates within aromatic compound metabolism; 3-phenylpropanoate degradation. Functionally, catalyzes the insertion of one atom of molecular oxygen into position 2 of the phenyl ring of 3-(3-hydroxyphenyl)propionate (3-HPP) and hydroxycinnamic acid (3HCI). This Mycolicibacterium smegmatis (strain ATCC 700084 / mc(2)155) (Mycobacterium smegmatis) protein is 3-(3-hydroxy-phenyl)propionate/3-hydroxycinnamic acid hydroxylase.